Reading from the N-terminus, the 172-residue chain is 3-hydroxydecanoyl-[acyl-carrier-protein] dehydratase (172 aa).

Residue H71 is part of the active site.

This sequence belongs to the thioester dehydratase family. FabA subfamily. As to quaternary structure, homodimer.

It localises to the cytoplasm. The enzyme catalyses a (3R)-hydroxyacyl-[ACP] = a (2E)-enoyl-[ACP] + H2O. It carries out the reaction (3R)-hydroxydecanoyl-[ACP] = (2E)-decenoyl-[ACP] + H2O. The catalysed reaction is (2E)-decenoyl-[ACP] = (3Z)-decenoyl-[ACP]. The protein operates within lipid metabolism; fatty acid biosynthesis. In terms of biological role, necessary for the introduction of cis unsaturation into fatty acids. Catalyzes the dehydration of (3R)-3-hydroxydecanoyl-ACP to E-(2)-decenoyl-ACP and then its isomerization to Z-(3)-decenoyl-ACP. Can catalyze the dehydratase reaction for beta-hydroxyacyl-ACPs with saturated chain lengths up to 16:0, being most active on intermediate chain length. The sequence is that of 3-hydroxydecanoyl-[acyl-carrier-protein] dehydratase from Edwardsiella ictaluri (strain 93-146).